Consider the following 169-residue polypeptide: Secreted RxLR effector protein BLN03 (169 aa).

The signal sequence occupies residues 1–21 (MRPRKYIVVVLLSIAYTMCLA). The dEER signature appears at 51 to 54 (TEER). Residues 149 to 169 (GSAFLFVIGFIVLLAFAMTAV) traverse the membrane as a helical segment.

Belongs to the RxLR effector family. In terms of assembly, interacts with host transcription factor NAC069.

It localises to the secreted. Its subcellular location is the host membrane. In terms of biological role, secreted effector that inhibits stress-induced relocalization of the endoplasmic reticulum tail-anchored transcription factors to the nucleus, thus affecting stress responses. The sequence is that of Secreted RxLR effector protein BLN03 from Bremia lactucae (Lettuce downy mildew).